The following is a 23-amino-acid chain: Acidic phospholipase A2 Ts-A5 (23 aa).

It depends on Ca(2+) as a cofactor. Contains 7 disulfide bonds. In terms of tissue distribution, expressed by the venom gland.

The protein resides in the secreted. The catalysed reaction is a 1,2-diacyl-sn-glycero-3-phosphocholine + H2O = a 1-acyl-sn-glycero-3-phosphocholine + a fatty acid + H(+). Snake venom phospholipase A2 (PLA2) that shows a moderate inhibition of ADP-induced human platelet aggregation when tested on platelet rich plasma. Exhibits high hydrolytic activities and prefers the anionic micelles (dPPC with deoxycholate) to the zwitterionic micelles (dPPC with Triton X-100). PLA2 catalyzes the calcium-dependent hydrolysis of the 2-acyl groups in 3-sn-phosphoglycerides. The chain is Acidic phospholipase A2 Ts-A5 from Trimeresurus stejnegeri (Chinese green tree viper).